A 306-amino-acid polypeptide reads, in one-letter code: Ribosomal RNA small subunit methyltransferase H (306 aa).

Residues 36 to 38, Asp56, Phe80, Asp97, and Gln104 each bind S-adenosyl-L-methionine; that span reads GGH. The tract at residues 280-306 is disordered; sequence ASEEEVAGNPRSRSAVMRVAERTGEAA.

Belongs to the methyltransferase superfamily. RsmH family.

The protein resides in the cytoplasm. The enzyme catalyses cytidine(1402) in 16S rRNA + S-adenosyl-L-methionine = N(4)-methylcytidine(1402) in 16S rRNA + S-adenosyl-L-homocysteine + H(+). Functionally, specifically methylates the N4 position of cytidine in position 1402 (C1402) of 16S rRNA. The polypeptide is Ribosomal RNA small subunit methyltransferase H (Polaromonas naphthalenivorans (strain CJ2)).